A 438-amino-acid chain; its full sequence is DNA primase DnaG (438 aa).

The 75-residue stretch at 169–243 folds into the Toprim domain; it reads DSIIVVEGRA…DIDYVARAPY (75 aa). Positions 175, 217, and 219 each coordinate Mg(2+).

This sequence belongs to the archaeal DnaG primase family. Forms a ternary complex with MCM helicase and DNA. It depends on Mg(2+) as a cofactor.

It catalyses the reaction ssDNA + n NTP = ssDNA/pppN(pN)n-1 hybrid + (n-1) diphosphate.. RNA polymerase that catalyzes the synthesis of short RNA molecules used as primers for DNA polymerase during DNA replication. The protein is DNA primase DnaG of Methanococcus maripaludis (strain C6 / ATCC BAA-1332).